Consider the following 363-residue polypeptide: Neurogenic differentiation factor 2 (363 aa).

The segment at 1–116 (MLTRLFKEPS…VRRQKANARE (116 aa)) is disordered. Residues 28-44 (EDSKTKDEEQERCRLGD) show a composition bias toward basic and acidic residues. Positions 64-83 (AGEEDYDEDVDEDDCGEEGD) are enriched in acidic residues. The segment covering 87–98 (PKKRGPKKRKMT) has biased composition (basic residues). The short motif at 93 to 99 (KKRKMTP) is the Nuclear localization signal element. The region spanning 107-159 (VRRQKANARERTRMHDLNSALDNLLKVVPCYSKTQKLSKIETLRLAKNYIWAL) is the bHLH domain.

Efficient DNA binding requires dimerization with another bHLH protein. In terms of tissue distribution, in adult, expressed strongly in brain and more weakly in skin, muscle, eye and ovary.

It localises to the nucleus. In terms of biological role, transcriptional regulator. Appears to mediate neuronal differentiation. This chain is Neurogenic differentiation factor 2, found in Danio rerio (Zebrafish).